The chain runs to 433 residues: MDTCFFCGAVDLSDTGSSSSMRYETLSAKVPSSQKTVSLVLTHLANCIQTQLDLKPGARLCPRCFQELSDYDTIMVNLMTTQKRLTTQLKGALKSEFEVPESGEDILVEEVEIPQSDVETDADAEADALFVELVKDQEESDTEIKREFVDEEEEEDDDDDDEFICEDVDVGDSEALYGKSSDGEDRPTKKRVKQECTTCGKVYNSWYQLQKHISEEHSKQPNHICPICGVIRRDEEYLELHMNLHEGKTEKQCRYCPKSFSRPVNTLRHMRMHWDKKKYQCEKCGLRFSQDNLLYNHRLRHEAEENPIICSICNVSFKSRKTFNHHTLIHKENRPRHYCSVCPKSFTERYTLKMHMKTHEGDVVYGVREEAPADEQQVVEELHVDVDESEAAVTVIMSDNDENSGFCLICNTNFENKKELEHHLQFDHDVVLK.

The ZAD domain maps to 1 to 90 (MDTCFFCGAV…TQKRLTTQLK (90 aa)). Zn(2+) contacts are provided by C4, C7, C61, and C64. The tract at residues 141-162 (DTEIKREFVDEEEEEDDDDDDE) is disordered. Residues 149–162 (VDEEEEEDDDDDDE) show a composition bias toward acidic residues. The short motif at 187-193 (PTKKRVK) is the Nuclear localization signal element. 7 consecutive C2H2-type zinc fingers follow at residues 194–217 (QECT…SEEH), 223–245 (HICP…MNLH), 251–273 (KQCR…MRMH), 279–301 (YQCE…RLRH), 308–330 (IICS…TLIH), 337–359 (HYCS…MKTH), and 405–428 (GFCL…QFDH).

In terms of assembly, homodimer (via ZAD domain) in solution. Binds DNA as a homodimer. N-terminal regions of the protein are required, in addition to the zinc fingers, for the specificity of chromatin-binding. As to expression, predominantly localized to the sub- and supraesophagal ganglia and the ventral nerve cord in the embryo, after dorsal closure.

The protein resides in the nucleus. In terms of biological role, transcriptional activator that controls bicoid gene expression during oogenesis. Found in transcriptionally active cells. Binds to specific sites on polytene chromosomes of third instar larvae. Binds to the consensus DNA sequence 5'-YTAGAGATGGRAA-3'. In Drosophila melanogaster (Fruit fly), this protein is Serendipity locus protein delta (Sry-delta).